Reading from the N-terminus, the 298-residue chain is Probable 3-hydroxyacyl-CoA dehydrogenase F54C8.1 (298 aa).

The protein belongs to the 3-hydroxyacyl-CoA dehydrogenase family. In terms of assembly, homodimer.

The protein resides in the mitochondrion matrix. The enzyme catalyses a (3S)-3-hydroxyacyl-CoA + NAD(+) = a 3-oxoacyl-CoA + NADH + H(+). The protein operates within lipid metabolism; fatty acid beta-oxidation. This Caenorhabditis elegans protein is Probable 3-hydroxyacyl-CoA dehydrogenase F54C8.1.